An 898-amino-acid chain; its full sequence is Netrin receptor UNC5A (898 aa).

The first 25 residues, 1 to 25, serve as a signal peptide directing secretion; that stretch reads MAVRPGLWPVLLGIVLAAWLRGSGA. The Extracellular segment spans residues 26–361; the sequence is QQSATVANPV…TASCPEDVAL (336 aa). One can recognise an Ig-like domain in the interval 44–141; sequence PHFLVEPEDV…SGTTKSQKAY (98 aa). Disulfide bonds link C65/C126, C77/C124, and C170/C221. N-linked (GlcNAc...) asparagine glycans are attached at residues N107 and N218. Positions 155–238 constitute an Ig-like C2-type domain; it reads PLAKEVSLEQ…RRRSTSAAVI (84 aa). TSP type-1 domains are found at residues 242–296 and 298–350; these read NGGW…TLCP and DGSW…DLCL. Residues W245, W248, and W251 are each glycosylated (C-linked (Man) tryptophan). Cystine bridges form between C254–C291, C258–C295, and C269–C281. Residues W301 and W304 are each glycosylated (C-linked (Man) tryptophan). Cystine bridges form between C310–C344, C314–C349, and C322–C334. N343 is a glycosylation site (N-linked (GlcNAc...) asparagine). A helical membrane pass occupies residues 362 to 382; sequence YIGLVAVAVCLFLLLLALGLI. The Cytoplasmic portion of the chain corresponds to 383–898; that stretch reads YCRKKEGLDS…GLFTVSEAEC (516 aa). The ZU5 domain occupies 497-640; it reads NMAYGTFNFL…LGRFALVGEA (144 aa). The interval 661–679 is interaction with DCC; the sequence is SLEYNIRVYCLHDTHDALK. One can recognise a Death domain in the interval 817–897; it reads QKIIASLDPP…AGLFTVSEAE (81 aa).

The protein belongs to the unc-5 family. In terms of assembly, homodimer and homooligomer. Interacts with the cytoplasmic part of DCC. Interacts with MAGED1. Interacts with PRKCABP, possibly mediating some interaction with PKC. Interacts (via extracellular domain) with FLRT2 (via extracellular domain). Interacts (via extracellular domain) with FLRT3 (via extracellular domain). Post-translationally, phosphorylated on cytoplasmic tyrosine residues. Phosphorylated by PKC in vitro. In terms of processing, proteolytically cleaved by caspases during apoptosis. The cleavage does not take place when the receptor is associated with netrin ligand. Its cleavage by caspases is required to induce apoptosis. The two extracellular TSRs of UNC5A contain WxxWxxWxxC motifs that can be C-mannosylated on all tryptophans. DPY19L1 preferentially mannosylates the first two tryptophans and DPY19L3 prefers the third. C-mannosylation by DPY19L1 is required for transport of UNC5A from the endoplasmic reticulum to the cell surface. As to expression, mainly expressed in regions of differentiating neurons. Expressed at early stages of neural tube development in the ventral spinal cord. In developing hindbrain, it colocalizes with a number of cranial motor neuron subpopulations from embryonic E11 to E14, while DCC is expressed by motor neurons at E12. Also expressed in non-neural structures, such as the basal plane of the hindbrain and midbrain, in the developing hypothalamus, thalamus and in the pallidum.

Its subcellular location is the cell membrane. The protein localises to the membrane raft. It localises to the cell projection. It is found in the neuron projection. In terms of biological role, receptor for netrin required for axon guidance. Functions in the netrin signaling pathway and promotes neurite outgrowth in response to NTN1. Mediates axon repulsion of neuronal growth cones in the developing nervous system in response to netrin. Axon repulsion in growth cones may be mediated by its association with DCC that may trigger signaling for repulsion. It also acts as a dependence receptor required for apoptosis induction when not associated with netrin ligand. This is Netrin receptor UNC5A (Unc5a) from Rattus norvegicus (Rat).